The following is a 646-amino-acid chain: Zinc finger protein 503 (646 aa).

Residues 1–11 (MSTAPSLSALR) are compositionally biased toward polar residues. Residues 1 to 70 (MSTAPSLSAL…PPSDPLRQAN (70 aa)) form a disordered region. Gly residues predominate over residues 16-28 (SGGGGGGGGGGGA). The segment covering 34-52 (SALSGNSSGPGPGSSPAGS) has biased composition (low complexity). Ser-102 is subject to Phosphoserine. A disordered region spans residues 121–332 (SQIGKPDPSP…PSAPTSSSVL (212 aa)). Low complexity predominate over residues 130 to 139 (PSSKLSSVAS). 2 stretches are compositionally biased toward gly residues: residues 140 to 152 (NGGGAGGAGGGAA) and 189 to 205 (GGGGGGGGGGGGGGGGV). N6-acetyllysine is present on Lys-209. Residues 217-226 (ATCQPFTPRT) show a composition bias toward polar residues. A compositionally biased stretch (low complexity) spans 227 to 240 (GSPSSSASACSPGG). A phosphoserine mark is found at Ser-231 and Ser-237. The span at 250–259 (EGKDDKKDTD) shows a compositional bias: basic and acidic residues. 2 stretches are compositionally biased toward gly residues: residues 260-277 (VGGGGKGTGGASAEGGPT) and 300-315 (GGPGGKALGSDCGGSS). Residues 316–330 (GSSSGSGPSAPTSSS) are compositionally biased toward low complexity. The segment at 514 to 542 (HICNWVSANGPCDKRFATSEELLSHLRTH) adopts a C2H2-type zinc-finger fold. Arg-636 is subject to Omega-N-methylarginine.

Belongs to the Elbow/Noc family.

The protein localises to the nucleus. Its function is as follows. May function as a transcriptional repressor. The polypeptide is Zinc finger protein 503 (ZNF503) (Homo sapiens (Human)).